Here is a 27-residue protein sequence, read N- to C-terminus: Phospholipase A2 1 (27 aa).

It belongs to the phospholipase A2 family. Group I subfamily. The cofactor is Ca(2+). As to expression, expressed by the venom gland.

The protein localises to the secreted. The enzyme catalyses a 1,2-diacyl-sn-glycero-3-phosphocholine + H2O = a 1-acyl-sn-glycero-3-phosphocholine + a fatty acid + H(+). Functionally, snake venom phospholipase A2 (PLA2) that inhibits neuromuscular transmission by blocking acetylcholine release from the nerve termini. PLA2 catalyzes the calcium-dependent hydrolysis of the 2-acyl groups in 3-sn-phosphoglycerides. This Micrurus nigrocinctus (Central American coral snake) protein is Phospholipase A2 1.